The following is a 237-amino-acid chain: Large ribosomal subunit protein uL2 (237 aa).

Residues 202-237 (FGGGNRKHPGKPTTVSRNAPPGRKVGHIAARRTGKR) are disordered. Residues 225–237 (KVGHIAARRTGKR) show a composition bias toward basic residues.

The protein belongs to the universal ribosomal protein uL2 family. As to quaternary structure, part of the 50S ribosomal subunit. Forms a bridge to the 30S subunit in the 70S ribosome.

Functionally, one of the primary rRNA binding proteins. Required for association of the 30S and 50S subunits to form the 70S ribosome, for tRNA binding and peptide bond formation. It has been suggested to have peptidyltransferase activity; this is somewhat controversial. Makes several contacts with the 16S rRNA in the 70S ribosome. The chain is Large ribosomal subunit protein uL2 from Methanococcoides burtonii (strain DSM 6242 / NBRC 107633 / OCM 468 / ACE-M).